A 396-amino-acid polypeptide reads, in one-letter code: Elongation factor Tu (396 aa).

Positions 10-206 constitute a tr-type G domain; the sequence is KLHVNVGTIG…ALDTHIPNPE (197 aa). Residues 19–26 form a G1 region; sequence GHVDHGKT. A GTP-binding site is contributed by 19–26; sequence GHVDHGKT. T26 lines the Mg(2+) pocket. Positions 60–64 are G2; the sequence is GITIS. Residues 81–84 are G3; it reads DCPG. GTP is bound by residues 81-85 and 136-139; these read DCPGH and NKAD. A G4 region spans residues 136 to 139; that stretch reads NKAD. A G5 region spans residues 174 to 176; sequence SAL.

This sequence belongs to the TRAFAC class translation factor GTPase superfamily. Classic translation factor GTPase family. EF-Tu/EF-1A subfamily. In terms of assembly, monomer.

It is found in the cytoplasm. It carries out the reaction GTP + H2O = GDP + phosphate + H(+). In terms of biological role, GTP hydrolase that promotes the GTP-dependent binding of aminoacyl-tRNA to the A-site of ribosomes during protein biosynthesis. This is Elongation factor Tu from Xylella fastidiosa (strain 9a5c).